The chain runs to 1054 residues: Translation initiation factor IF-2 (1054 aa).

Disordered stretches follow at residues 48-390 and 409-458; these read RSKL…LDLD and LARP…GTEP. The segment covering 65–76 has biased composition (pro residues); the sequence is KPPSESLPPEPP. A compositionally biased stretch (polar residues) spans 160–169; that stretch reads SEATQKPETV. Residues 179 to 193 are compositionally biased toward low complexity; that stretch reads SESAAAKASGSEPSP. 2 stretches are compositionally biased toward pro residues: residues 221-235 and 304-316; these read PQKAPEPSRPSPSEA and PTRPVAKPAPPEP. Positions 365 to 378 are enriched in basic residues; the sequence is RAARVQAKRKRSRR. A compositionally biased stretch (low complexity) spans 421 to 437; it reads PPAATAAPPARPRPAAR. Residues 545-718 enclose the tr-type G domain; it reads SRPPVVTIMG…LLVADVAELQ (174 aa). Residues 554–561 form a G1 region; sequence GHVDHGKT. 554–561 contributes to the GTP binding site; sequence GHVDHGKT. Residues 579–583 are G2; it reads GITQR. The interval 604-607 is G3; sequence DTPG. GTP-binding positions include 604–608 and 658–661; these read DTPGH and NKID. The G4 stretch occupies residues 658–661; it reads NKID. A G5 region spans residues 694-696; it reads SAL.

The protein belongs to the TRAFAC class translation factor GTPase superfamily. Classic translation factor GTPase family. IF-2 subfamily.

It is found in the cytoplasm. In terms of biological role, one of the essential components for the initiation of protein synthesis. Protects formylmethionyl-tRNA from spontaneous hydrolysis and promotes its binding to the 30S ribosomal subunits. Also involved in the hydrolysis of GTP during the formation of the 70S ribosomal complex. This chain is Translation initiation factor IF-2, found in Synechococcus sp. (strain JA-2-3B'a(2-13)) (Cyanobacteria bacterium Yellowstone B-Prime).